A 173-amino-acid chain; its full sequence is Glutamyl-tRNA(Gln) amidotransferase subunit F, mitochondrial (173 aa).

A mitochondrion-targeting transit peptide spans 1-15 (MSRFMIRAVFFRRYT).

It belongs to the GatF family. As to quaternary structure, subunit of the heterotrimeric GatFAB amidotransferase (AdT) complex, composed of A, B and F subunits.

It is found in the mitochondrion inner membrane. It catalyses the reaction L-glutamyl-tRNA(Gln) + L-glutamine + ATP + H2O = L-glutaminyl-tRNA(Gln) + L-glutamate + ADP + phosphate + H(+). Allows the formation of correctly charged Gln-tRNA(Gln) through the transamidation of misacylated Glu-tRNA(Gln) in the mitochondria. The reaction takes place in the presence of glutamine and ATP through an activated gamma-phospho-Glu-tRNA(Gln). Required for proper protein synthesis within the mitochondrion. The protein is Glutamyl-tRNA(Gln) amidotransferase subunit F, mitochondrial of Candida glabrata (strain ATCC 2001 / BCRC 20586 / JCM 3761 / NBRC 0622 / NRRL Y-65 / CBS 138) (Yeast).